We begin with the raw amino-acid sequence, 366 residues long: tRNA/tmRNA (uracil-C(5))-methyltransferase (366 aa).

5 residues coordinate S-adenosyl-L-methionine: Gln-190, Tyr-218, Asn-223, Glu-239, and Asp-299. The Nucleophile role is filled by Cys-324. The Proton acceptor role is filled by Glu-358.

The protein belongs to the class I-like SAM-binding methyltransferase superfamily. RNA M5U methyltransferase family. TrmA subfamily.

It catalyses the reaction uridine(54) in tRNA + S-adenosyl-L-methionine = 5-methyluridine(54) in tRNA + S-adenosyl-L-homocysteine + H(+). The enzyme catalyses uridine(341) in tmRNA + S-adenosyl-L-methionine = 5-methyluridine(341) in tmRNA + S-adenosyl-L-homocysteine + H(+). Its function is as follows. Dual-specificity methyltransferase that catalyzes the formation of 5-methyluridine at position 54 (m5U54) in all tRNAs, and that of position 341 (m5U341) in tmRNA (transfer-mRNA). The chain is tRNA/tmRNA (uracil-C(5))-methyltransferase from Enterobacter sp. (strain 638).